We begin with the raw amino-acid sequence, 313 residues long: Olfactory receptor 1M1 (313 aa).

The Extracellular segment spans residues 1 to 25 (MEPQNHTSASEFILLGLSEKPDHDP). N-linked (GlcNAc...) asparagine glycosylation is present at N5. The chain crosses the membrane as a helical span at residues 26–46 (VLFSLFLCMYMITVVGNLLII). The Cytoplasmic segment spans residues 47–54 (LAISFDSH). Residues 55-75 (LHTPMYFFLANLSLVDFCLAT) traverse the membrane as a helical segment. The Extracellular portion of the chain corresponds to 76 to 97 (NTVPKMLVNIQTRNKSISYPCC). N-linked (GlcNAc...) asparagine glycosylation occurs at N89. An intrachain disulfide couples C97 to C179. A helical membrane pass occupies residues 98 to 118 (LTQMYFFHFFGIMDSVLIAVM). The Cytoplasmic portion of the chain corresponds to 119–142 (AYDRFVAICHPLHYSTIMSPRLCG). A helical transmembrane segment spans residues 143 to 163 (LLVGVPWVYSCFISLTHILLM). At 164–196 (ARLVFCGKNELPHYFCDLTPLLRLSCTDTTVNK) the chain is on the extracellular side. Residues 197–217 (IFVLIVAGMVIATPFVCILAS) form a helical membrane-spanning segment. Residues 218–244 (YARIIVAIMKVPSAGGRKKAFSTCSSH) lie on the Cytoplasmic side of the membrane. Residues 245–265 (LSVVALFYGTTIGVYLCPSSV) traverse the membrane as a helical segment. Residues 266 to 274 (RTAVKEKAS) are Extracellular-facing. The chain crosses the membrane as a helical span at residues 275–292 (AVMYTAVTPMLNPFIYSL). At 293–313 (RNRDLKGALKKIINRKISTSS) the chain is on the cytoplasmic side.

This sequence belongs to the G-protein coupled receptor 1 family. Expressed in testis.

It localises to the cell membrane. Odorant receptor. This is Olfactory receptor 1M1 from Mus musculus (Mouse).